A 493-amino-acid polypeptide reads, in one-letter code: Stage V sporulation protein AF (493 aa).

5 helical membrane passes run 296-316, 334-354, 363-383, 387-407, and 418-438; these read FFGI…VLQP, IPII…RMAA, TAMG…VGLF, VILY…YELS, and MILV…VLII.

Belongs to the GerABKA family.

It is found in the cell membrane. This chain is Stage V sporulation protein AF (spoVAF), found in Bacillus subtilis (strain 168).